We begin with the raw amino-acid sequence, 934 residues long: Oxysterol-binding protein-related protein 6 (934 aa).

Residues 1 to 62 form a disordered region; sequence MSSDEKGISP…RQLLEPEPVP (62 aa). Position 2 is an N-acetylserine (S2). A compositionally biased stretch (low complexity) spans 14 to 29; sequence TSTPTHRSASSSTSSQ. Residues 30–40 show a composition bias toward basic and acidic residues; the sequence is RDSRQSIHILE. S35 carries the post-translational modification Phosphoserine. Residues 42–53 show a composition bias toward polar residues; that stretch reads TASSSTEPSVSR. A PH domain is found at 86-181; that stretch reads PDKHEGFMLK…WVSKLRHHRL (96 aa). Residues S190 and S290 each carry the phosphoserine modification.

The protein belongs to the OSBP family. As to quaternary structure, homodimer. Interacts with OSBPL3. In terms of tissue distribution, expressed in brain and striated muscle (at protein level). Widely expressed. Expressed in skeletal muscle.

It is found in the cytoplasm. The protein localises to the cytosol. It localises to the endoplasmic reticulum membrane. The protein resides in the nucleus envelope. Its subcellular location is the cell membrane. It is found in the endosome membrane. Regulates cellular transport and efflux of cholesterol. Plays a role in phosphatidylinositol-4-phophate (PI4P) turnover at the neuronal membrane. Binds via its PH domain PI4P, phosphatidylinositol-4,5-diphosphate, phosphatidylinositol-3,4,5-triphosphate, and phosphatidic acid. Weakly binds 25-hydroxycholesterol. The chain is Oxysterol-binding protein-related protein 6 (OSBPL6) from Homo sapiens (Human).